We begin with the raw amino-acid sequence, 360 residues long: Pyrimidine monooxygenase RutA (360 aa).

Residues 49–50, asparagine 115, glutamate 124, 140–141, and serine 190 contribute to the FMN site; these read IK and RY.

This sequence belongs to the NtaA/SnaA/DszA monooxygenase family. RutA subfamily.

The enzyme catalyses uracil + FMNH2 + NADH + O2 = (Z)-3-ureidoacrylate + FMN + NAD(+) + H2O + H(+). It catalyses the reaction thymine + FMNH2 + NADH + O2 = (Z)-2-methylureidoacrylate + FMN + NAD(+) + H2O + H(+). Functionally, catalyzes the pyrimidine ring opening between N-3 and C-4 by an unusual flavin hydroperoxide-catalyzed mechanism, adding oxygen atoms in the process to yield ureidoacrylate peracid, that immediately reacts with FMN forming ureidoacrylate and FMN-N(5)-oxide. The FMN-N(5)-oxide reacts spontaneously with NADH to produce FMN. Requires the flavin reductase RutF to regenerate FMN in vivo. This is Pyrimidine monooxygenase RutA from Stutzerimonas stutzeri (strain A1501) (Pseudomonas stutzeri).